Reading from the N-terminus, the 640-residue chain is Chaperone protein DnaK (640 aa).

T196 bears the Phosphothreonine; by autocatalysis mark. Disordered regions lie at residues 510–530 and 598–640; these read NDAKAHAEEDAKRKEEVETKN and AADA…DKDK.

It belongs to the heat shock protein 70 family.

Acts as a chaperone. The protein is Chaperone protein DnaK of Prosthecochloris aestuarii (strain DSM 271 / SK 413).